Reading from the N-terminus, the 124-residue chain is Small ribosomal subunit protein uS12c (124 aa).

The protein belongs to the universal ribosomal protein uS12 family. As to quaternary structure, part of the 30S ribosomal subunit.

It localises to the plastid. It is found in the chloroplast. Its function is as follows. With S4 and S5 plays an important role in translational accuracy. Located at the interface of the 30S and 50S subunits. This chain is Small ribosomal subunit protein uS12c (rps12), found in Oryza nivara (Indian wild rice).